Consider the following 942-residue polypeptide: Chitin synthase 4 (942 aa).

The tract at residues 1–124 is disordered; that stretch reads MPPRYPFGGG…FDEHDGDVPL (124 aa). A compositionally biased stretch (basic and acidic residues) spans 14–26; that stretch reads DEAHHQPLERRTT. Over residues 27–36 the composition is skewed to polar residues; the sequence is AEAQGNSFTH. An N-linked (GlcNAc...) asparagine glycan is attached at asparagine 604. 7 helical membrane-spanning segments follow: residues 641-661, 674-694, 709-729, 755-775, 783-803, 885-905, and 909-929; these read TIQL…FFIL, VPNL…FLLS, AMVV…YLAV, IVIS…MFLE, IVQY…YAFA, VLCW…ISSI, and TIYM…RMMG.

Belongs to the chitin synthase family. Class I subfamily.

Its subcellular location is the cell membrane. The protein localises to the cytoplasmic vesicle membrane. The catalysed reaction is [(1-&gt;4)-N-acetyl-beta-D-glucosaminyl](n) + UDP-N-acetyl-alpha-D-glucosamine = [(1-&gt;4)-N-acetyl-beta-D-glucosaminyl](n+1) + UDP + H(+). In terms of biological role, polymerizes chitin, a structural polymer of the cell wall and septum, by transferring the sugar moiety of UDP-GlcNAc to the non-reducing end of the growing chitin polymer. In Mycosarcoma maydis (Corn smut fungus), this protein is Chitin synthase 4.